The following is a 235-amino-acid chain: Transmembrane emp24 domain-containing protein 9 (235 aa).

A signal peptide spans 1-37 (MAVELGVLLVRPRPGTGLGRVMRTLLLVLWLATRGSA). The Lumenal segment spans residues 38–202 (LYFHIGETEK…RQTSESTNQR (165 aa)). The GOLD domain maps to 47-145 (KKCFIEEIPD…MLRVHLDIQV (99 aa)). The segment at 121 to 160 (CLHSNSTKFSLFAGGMLRVHLDIQVGEHANDYAEIAAKDK) is required for interaction with STX17. Asn-125 carries N-linked (GlcNAc...) asparagine glycosylation. The stretch at 154-184 (EIAAKDKLSELQLRVRQLVEQVEQIQKEQNY) forms a coiled coil. Lys-160 carries the N6-acetyllysine modification. Residues 203 to 222 (VLWWSILQTLILVAIGVWQM) form a helical membrane-spanning segment. Topologically, residues 223-235 (RHLKSFFEAKKLV) are cytoplasmic. A COPII vesicle coat-binding motif is present at residues 228–229 (FF). A COPI vesicle coat-binding motif is present at residues 228–235 (FFEAKKLV).

Belongs to the EMP24/GP25L family. As to quaternary structure, monomer and homodimer in endoplasmic reticulum. Predominantly monomeric and to lesser extent homodimeric in endoplasmic reticulum-Golgi intermediate compartment and cis-Golgi network. Probably oligomerizes with other members of the EMP24/GP25L family such as TMED2, TMED7 and TMED10. Interacts with TMED5. Interacts (via C-terminus) with COPG1; the interaction involves dimeric TMED9. Interacts with PTPN2 and SPAST. Interacts with STX17; the interaction is direct. N-linked glycosylated containing high mannose.

The protein resides in the endoplasmic reticulum membrane. It is found in the golgi apparatus. Its subcellular location is the cis-Golgi network membrane. The protein localises to the endoplasmic reticulum-Golgi intermediate compartment membrane. It localises to the trans-Golgi network membrane. Functionally, appears to be involved in vesicular protein trafficking, mainly in the early secretory pathway. In COPI vesicle-mediated retrograde transport involved in the coatomer recruitment to membranes of the early secretory pathway. Increases coatomer-dependent activity of ARFGAP2. Thought to play a crucial role in the specific retention of p24 complexes in cis-Golgi membranes; specifically contributes to the coupled localization of TMED2 and TMED10 in the cis-Golgi network. May be involved in organization of intracellular membranes, such as of the ER-Golgi intermediate compartment and the Golgi apparatus. Involved in ER localization of PTPN2 isoform PTPB. The chain is Transmembrane emp24 domain-containing protein 9 (TMED9) from Homo sapiens (Human).